The chain runs to 550 residues: Glucose-6-phosphate isomerase 3 (550 aa).

Glu357 acts as the Proton donor in catalysis. Residues His388 and Lys514 contribute to the active site.

Belongs to the GPI family.

It localises to the cytoplasm. The enzyme catalyses alpha-D-glucose 6-phosphate = beta-D-fructose 6-phosphate. It participates in carbohydrate biosynthesis; gluconeogenesis. Its pathway is carbohydrate degradation; glycolysis; D-glyceraldehyde 3-phosphate and glycerone phosphate from D-glucose: step 2/4. Catalyzes the reversible isomerization of glucose-6-phosphate to fructose-6-phosphate. The chain is Glucose-6-phosphate isomerase 3 from Rhodococcus jostii (strain RHA1).